A 547-amino-acid chain; its full sequence is MTETLSKTTEPSVTTGPIPGSSKAYREVANPDGGPSLRVPFRRVHLSTGAHFDLYDTSGPYTDPDAVINLTAGLPPRPGVIRDRGTQLQRARAGEITAEMAFIADREGMPAELVRVEVALGRAVIPANHNHPEIEPMIIGKAFAVKVNANIGNSAVTSSIAEEIDKMVWATRWGADTIMDLSTGKNIHETREWILRNSPVPVGTVPIYQALEKVKGDPTKLTWEIYRDTVIEQCEQGVDYMTVHAGVLLRYVLLTAKRVTGIVSRGGSIMASWCLANHRESFLYTNFAELCDIFARYDVTFSLGDGLRPGSIADANDTAQFAELRTLGELSKIAKVHGAQVMIEGPGHIPMHKIVENVRLEEELCEEAPFYTLGPLATDIAPAYDHITSAIGAAVIAQAGTAMLCYVTPKEHLGLPDRKDVKDGVIAYKIAAHAADLAKGYPRAQERDDALSTARFEFRWNDQFALSLDPPTAREFHDETLPAEPAKTAHFCSMCGPKFCSMRITADIRVYAAKHGLDTEEAIEMGMTEKSAEFAEHGNRVYLPLTQ.

Residues 1-15 (MTETLSKTTEPSVTT) are compositionally biased toward polar residues. The tract at residues 1–36 (MTETLSKTTEPSVTTGPIPGSSKAYREVANPDGGPS) is disordered. Residues Asn150, Met179, Tyr208, His244, 264–266 (SRG), 305–308 (DGLR), and Glu344 contribute to the substrate site. His348 contributes to the Zn(2+) binding site. Tyr371 contacts substrate. Residue His412 participates in Zn(2+) binding. [4Fe-4S] cluster is bound by residues Cys492, Cys495, and Cys500.

It belongs to the ThiC family. The cofactor is [4Fe-4S] cluster.

The catalysed reaction is 5-amino-1-(5-phospho-beta-D-ribosyl)imidazole + S-adenosyl-L-methionine = 4-amino-2-methyl-5-(phosphooxymethyl)pyrimidine + CO + 5'-deoxyadenosine + formate + L-methionine + 3 H(+). The protein operates within cofactor biosynthesis; thiamine diphosphate biosynthesis. Catalyzes the synthesis of the hydroxymethylpyrimidine phosphate (HMP-P) moiety of thiamine from aminoimidazole ribotide (AIR) in a radical S-adenosyl-L-methionine (SAM)-dependent reaction. The sequence is that of Phosphomethylpyrimidine synthase from Mycobacterium leprae (strain Br4923).